The following is a 461-amino-acid chain: Phosphomethylpyrimidine synthase (461 aa).

Substrate-binding positions include N81, M110, Y140, H176, 196 to 198 (SRG), 237 to 240 (DSLR), and E276. Residue H280 participates in Zn(2+) binding. Residue Y303 coordinates substrate. A Zn(2+)-binding site is contributed by H344. [4Fe-4S] cluster-binding residues include C424, C427, and C432.

This sequence belongs to the ThiC family. It depends on [4Fe-4S] cluster as a cofactor.

It catalyses the reaction 5-amino-1-(5-phospho-beta-D-ribosyl)imidazole + S-adenosyl-L-methionine = 4-amino-2-methyl-5-(phosphooxymethyl)pyrimidine + CO + 5'-deoxyadenosine + formate + L-methionine + 3 H(+). It participates in cofactor biosynthesis; thiamine diphosphate biosynthesis. In terms of biological role, catalyzes the synthesis of the hydroxymethylpyrimidine phosphate (HMP-P) moiety of thiamine from aminoimidazole ribotide (AIR) in a radical S-adenosyl-L-methionine (SAM)-dependent reaction. This Thermosynechococcus vestitus (strain NIES-2133 / IAM M-273 / BP-1) protein is Phosphomethylpyrimidine synthase.